Consider the following 326-residue polypeptide: MEMO1 family protein TTHA0924 (326 aa).

It belongs to the MEMO1 family.

The chain is MEMO1 family protein TTHA0924 from Thermus thermophilus (strain ATCC 27634 / DSM 579 / HB8).